An 872-amino-acid chain; its full sequence is Bifunctional uridylyltransferase/uridylyl-removing enzyme (872 aa).

The tract at residues 1–332 (MALPNKVKKL…PKHHQPIIQE (332 aa)) is uridylyltransferase. The uridylyl-removing stretch occupies residues 333 to 691 (LDRNFERIGN…VSNKAMHGGT (359 aa)). Positions 450–572 (VDEHTHRLIN…VKTERQLDYL (123 aa)) constitute an HD domain. ACT domains are found at residues 692 to 773 (QVFV…FKKN) and 799 to 872 (LIEI…AETE).

This sequence belongs to the GlnD family. Mg(2+) is required as a cofactor.

The catalysed reaction is [protein-PII]-L-tyrosine + UTP = [protein-PII]-uridylyl-L-tyrosine + diphosphate. It carries out the reaction [protein-PII]-uridylyl-L-tyrosine + H2O = [protein-PII]-L-tyrosine + UMP + H(+). With respect to regulation, uridylyltransferase (UTase) activity is inhibited by glutamine, while glutamine activates uridylyl-removing (UR) activity. In terms of biological role, modifies, by uridylylation and deuridylylation, the PII regulatory proteins (GlnB and homologs), in response to the nitrogen status of the cell that GlnD senses through the glutamine level. Under low glutamine levels, catalyzes the conversion of the PII proteins and UTP to PII-UMP and PPi, while under higher glutamine levels, GlnD hydrolyzes PII-UMP to PII and UMP (deuridylylation). Thus, controls uridylylation state and activity of the PII proteins, and plays an important role in the regulation of nitrogen assimilation and metabolism. The chain is Bifunctional uridylyltransferase/uridylyl-removing enzyme from Pseudoalteromonas translucida (strain TAC 125).